Reading from the N-terminus, the 137-residue chain is Cell division protein SepF (137 aa).

Belongs to the SepF family. As to quaternary structure, homodimer. Interacts with FtsZ.

It is found in the cytoplasm. In terms of biological role, cell division protein that is part of the divisome complex and is recruited early to the Z-ring. Probably stimulates Z-ring formation, perhaps through the cross-linking of FtsZ protofilaments. Its function overlaps with FtsA. In Thermoanaerobacter pseudethanolicus (strain ATCC 33223 / 39E) (Clostridium thermohydrosulfuricum), this protein is Cell division protein SepF.